Consider the following 120-residue polypeptide: U13-lycotoxin-Ls1a (120 aa).

Residues 1–16 (MKILFVLISILYAVYC) form the signal peptide. The propeptide occupies 17–54 (FSSEEDVDSAYLANELEPVEDINSEQYAALEPKEEQER). Disulfide bonds link C56-C70, C63-C76, C69-C87, and C78-C85. Residues 56–95 (CADMGQDCKDDCDCCLNIATCNCWFGRYFCSCTFGDYQTC) form the Agouti domain.

It belongs to the neurotoxin 05 (agouti) family. Contains 6 disulfide bonds. In terms of tissue distribution, expressed by the venom gland.

It is found in the secreted. The protein is U13-lycotoxin-Ls1a of Lycosa singoriensis (Wolf spider).